The sequence spans 281 residues: Undecaprenyl-diphosphatase (281 aa).

The next 6 helical transmembrane spans lie at 90–110, 113–133, 147–167, 191–211, 217–237, and 257–277; these read WLVT…QDSI, VLRG…VLGA, LSWK…IPGV, SFLL…YDEL, IAWV…YAVI, and IAAA…AFQG.

It belongs to the UppP family.

It is found in the cell membrane. The catalysed reaction is di-trans,octa-cis-undecaprenyl diphosphate + H2O = di-trans,octa-cis-undecaprenyl phosphate + phosphate + H(+). Functionally, catalyzes the dephosphorylation of undecaprenyl diphosphate (UPP). Confers resistance to bacitracin. This Kineococcus radiotolerans (strain ATCC BAA-149 / DSM 14245 / SRS30216) protein is Undecaprenyl-diphosphatase.